We begin with the raw amino-acid sequence, 1251 residues long: Insulin receptor substrate 1 (1251 aa).

Phosphoserine is present on serine 3. The mediates interaction with PHIP stretch occupies residues 3-137 (SPPESDGFSD…GAGGGGGSCS (135 aa)). Residues 12-115 (DVRKVGYLRK…WYQALLQLHN (104 aa)) form the PH domain. Serine 99 carries the post-translational modification Phosphoserine; by CK2. An IRS-type PTB domain is found at 160 to 264 (FKEVWQVILK…EAMRAMSDEF (105 aa)). Positions 262–430 (DEFRPRSKSQ…SDGGFISSDE (169 aa)) are disordered. The span at 269 to 281 (KSQSSSNCSNPIS) shows a compositional bias: low complexity. The residue at position 270 (serine 270) is a Phosphoserine. Residue serine 307 is modified to Phosphoserine; by RPS6KB1. Position 312 is a phosphoserine; by IKKB, MAPK8 and RPS6KB1 (serine 312). Phosphoserine is present on residues serine 323, serine 330, serine 345, and serine 348. The span at 354-363 (THAHRHRGSA) shows a compositional bias: basic residues. Low complexity-rich tracts occupy residues 383–404 (SPSA…GSTS) and 412–424 (SSAS…SDGG). Serine 419 is subject to Phosphoserine. Threonine 446 and threonine 453 each carry phosphothreonine. Position 465 is a phosphotyrosine; by INSR (tyrosine 465). The short motif at 465 to 468 (YICM) is the YXXM motif 1 element. The tract at residues 494-513 (YTPGTGLGTSPALAGDEASS) is disordered. Serine 527 is subject to Phosphoserine; by RPS6KB1. The short motif at 551–554 (YTEM) is the YXXM motif 2 element. Residues 594-610 (RRGGHHRPDSSTLHTDD) are compositionally biased toward basic and acidic residues. Positions 594 to 616 (RRGGHHRPDSSTLHTDDGYMPMS) are disordered. Tyrosine 612 bears the Phosphotyrosine; by INSR mark. A YXXM motif 3 motif is present at residues 612–615 (YMPM). Position 629 is a phosphoserine (serine 629). Tyrosine 632 is modified (phosphotyrosine; by INSR). The YXXM motif 4 signature appears at 632–635 (YMPM). Residue serine 636 is modified to Phosphoserine; by RPS6KB1. Tyrosine 662 carries the phosphotyrosine modification. The short motif at 662–665 (YMMM) is the YXXM motif 5 element. A disordered region spans residues 668-692 (SGGCSPDIGGGPSSSSSSTVPSGSS). A YXXM motif 6 motif is present at residues 730 to 733 (YMNM). Disordered regions lie at residues 734–753 (SPVG…GPED) and 769–946 (FKHT…EETG). Basic and acidic residues predominate over residues 774-783 (RPGEPEEGAR). Serine 792 is subject to Phosphoserine; by AMPK and SIK2. Composition is skewed to low complexity over residues 799–813 (AATA…SSDS) and 875–891 (QQQQ…QQQQ). Serine 901 carries the phosphoserine modification. Tyrosine 905 is subject to Phosphotyrosine; by INSR. The interval 905-907 (YVN) is GRB2-binding. The span at 924–937 (SRSSPSVRCPSQLQ) shows a compositional bias: polar residues. Tyrosine 950 and tyrosine 998 each carry phosphotyrosine; by INSR. Short sequence motifs (YXXM motif) lie at residues 950–953 (YMKM), 998–1001 (YMTM), and 1021–1024 (YADM). 2 disordered regions span residues 1091 to 1124 (NQSA…RVGN) and 1130 to 1149 (AGAA…DVKR). Phosphoserine occurs at positions 1109 and 1110. The span at 1111–1123 (ETFSSTPSATRVG) shows a compositional bias: polar residues. Tyrosine 1188 carries the post-translational modification Phosphotyrosine; by INSR. A Glycyl lysine isopeptide (Lys-Gly) (interchain with G-Cter in ubiquitin) cross-link involves residue lysine 1195. The disordered stretch occupies residues 1195-1251 (KDFKQRPQECTPQPQPPPPPPPHQPLGSSESSSTRRSSEDLSAYASISFQKQPEDLQ). Positions 1207–1218 (QPQPPPPPPPHQ) are enriched in pro residues. At tyrosine 1238 the chain carries Phosphotyrosine; by INSR.

In terms of assembly, interacts with UBTF and PIK3CA. Interacts (via phosphorylated YXXM motifs) with PIK3R1. Interacts with ROCK1 and FER. Interacts (via PH domain) with PHIP. Interacts with GRB2. Interacts with SOCS7. Interacts (via IRS-type PTB domain) with IGF1R and INSR (via the tyrosine-phosphorylated NPXY motif). Interacts with ALK. Interacts with EIF2AK2/PKR. Interacts with GKAP1. Interacts with DGKZ in the absence of insulin; insulin stimulation decreases this interaction. Found in a ternary complex with DGKZ and PIP5K1A in the absence of insulin stimulation. Interacts with SQSTM1; the interaction is disrupted by the presence of tensin TNS2. Interacts with NCK1 (via SH2 domain). Interacts with NCK2 (via SH3 domain). Interacts with SH2B1; this interaction enhances leptin-induced activation of the PI3-kinase pathway. Interacts with DVL2; this interaction promotes the Wnt/beta-catenin signaling pathway. Interacts with JAK1. Serine phosphorylation of IRS1 is a mechanism for insulin resistance. Ser-312 phosphorylation inhibits insulin action through disruption of IRS1 interaction with the insulin receptor. Phosphorylation of Tyr-905 is required for GRB2-binding. Phosphorylated by ALK. Phosphorylated at Ser-270, Ser-307, Ser-636 and Ser-1109 by RPS6KB1; phosphorylation induces accelerated degradation of IRS1. Phosphorylated on tyrosine residues in response to insulin. In skeletal muscles, dephosphorylated on Tyr-612 by TNS2 under anabolic conditions; dephosphorylation results in the proteasomal degradation of IRS1. Post-translationally, ubiquitinated by the Cul7-RING(FBXW8) complex in a mTOR-dependent manner, leading to its degradation: the Cul7-RING(FBXW8) complex recognizes and binds IRS1 previously phosphorylated by S6 kinase (RPS6KB1 or RPS6KB2). Ubiquitinated by TRAF4 through 'Lys-29' linkage; this ubiquitination regulates the interaction of IRS1 with IGFR and IRS1 tyrosine phosphorylation upon IGF1 stimulation. In terms of processing, S-nitrosylation at by BLVRB inhibits its activity.

It localises to the cytoplasm. It is found in the nucleus. Its function is as follows. Signaling adapter protein that participates in the signal transduction from two prominent receptor tyrosine kinases, insulin receptor/INSR and insulin-like growth factor I receptor/IGF1R. Plays therefore an important role in development, growth, glucose homeostasis as well as lipid metabolism. Upon phosphorylation by the insulin receptor, functions as a signaling scaffold that propagates insulin action through binding to SH2 domain-containing proteins including the p85 regulatory subunit of PI3K, NCK1, NCK2, GRB2 or SHP2. Recruitment of GRB2 leads to the activation of the guanine nucleotide exchange factor SOS1 which in turn triggers the Ras/Raf/MEK/MAPK signaling cascade. Activation of the PI3K/AKT pathway is responsible for most of insulin metabolic effects in the cell, and the Ras/Raf/MEK/MAPK is involved in the regulation of gene expression and in cooperation with the PI3K pathway regulates cell growth and differentiation. Acts a positive regulator of the Wnt/beta-catenin signaling pathway through suppression of DVL2 autophagy-mediated degradation leading to cell proliferation. The chain is Insulin receptor substrate 1 (IRS1) from Chlorocebus aethiops (Green monkey).